The following is an 890-amino-acid chain: Translation initiation factor IF-2 (890 aa).

The disordered stretch occupies residues 45–304 (LIDHLNQKNS…LQQGFQKPAQ (260 aa)). A compositionally biased stretch (polar residues) spans 67 to 81 (STLNIPGTGGKSKSV). The span at 92 to 217 (VKRDPQEAER…RMAEENKWTD (126 aa)) shows a compositional bias: basic and acidic residues. Residues 252-266 (GRGRNAKAARPKKGN) are compositionally biased toward basic residues. A compositionally biased stretch (basic and acidic residues) spans 267–280 (KHSESKADREEARA). Residues 389 to 558 (PRAPVVTIMG…LLQAEVLELK (170 aa)) enclose the tr-type G domain. The interval 398-405 (GHVDHGKT) is G1. Position 398–405 (398–405 (GHVDHGKT)) interacts with GTP. The G2 stretch occupies residues 423 to 427 (GITQH). Residues 444–447 (DTPG) are G3. Residues 444–448 (DTPGH) and 498–501 (NKID) each bind GTP. The interval 498-501 (NKID) is G4. Residues 534 to 536 (SAK) form a G5 region. Lys-808 carries the post-translational modification N6-acetyllysine.

This sequence belongs to the TRAFAC class translation factor GTPase superfamily. Classic translation factor GTPase family. IF-2 subfamily.

It localises to the cytoplasm. Its function is as follows. One of the essential components for the initiation of protein synthesis. Protects formylmethionyl-tRNA from spontaneous hydrolysis and promotes its binding to the 30S ribosomal subunits. Also involved in the hydrolysis of GTP during the formation of the 70S ribosomal complex. The chain is Translation initiation factor IF-2 from Escherichia fergusonii (strain ATCC 35469 / DSM 13698 / CCUG 18766 / IAM 14443 / JCM 21226 / LMG 7866 / NBRC 102419 / NCTC 12128 / CDC 0568-73).